The following is a 403-amino-acid chain: Argininosuccinate synthase (403 aa).

Residues 13–21 (AYSGGLDTS) and Ala40 each bind ATP. L-citrulline is bound by residues Tyr91 and Ser96. ATP is bound at residue Gly121. L-aspartate contacts are provided by Thr123, Asn127, and Asp128. L-citrulline is bound at residue Asn127. Arg131, Ser180, Ser189, Glu265, and Tyr277 together coordinate L-citrulline.

Belongs to the argininosuccinate synthase family. Type 1 subfamily. In terms of assembly, homotetramer.

It is found in the cytoplasm. It catalyses the reaction L-citrulline + L-aspartate + ATP = 2-(N(omega)-L-arginino)succinate + AMP + diphosphate + H(+). The protein operates within amino-acid biosynthesis; L-arginine biosynthesis; L-arginine from L-ornithine and carbamoyl phosphate: step 2/3. This chain is Argininosuccinate synthase, found in Leptospira interrogans serogroup Icterohaemorrhagiae serovar copenhageni (strain Fiocruz L1-130).